The chain runs to 195 residues: Pyridoxal 5'-phosphate synthase subunit PdxT (195 aa).

An L-glutamine-binding site is contributed by 55 to 57 (GES). Cysteine 84 serves as the catalytic Nucleophile. Residues arginine 111 and 139-140 (IR) contribute to the L-glutamine site. Residues histidine 175 and glutamate 177 each act as charge relay system in the active site.

It belongs to the glutaminase PdxT/SNO family. As to quaternary structure, in the presence of PdxS, forms a dodecamer of heterodimers. Only shows activity in the heterodimer.

The enzyme catalyses aldehydo-D-ribose 5-phosphate + D-glyceraldehyde 3-phosphate + L-glutamine = pyridoxal 5'-phosphate + L-glutamate + phosphate + 3 H2O + H(+). The catalysed reaction is L-glutamine + H2O = L-glutamate + NH4(+). It participates in cofactor biosynthesis; pyridoxal 5'-phosphate biosynthesis. Catalyzes the hydrolysis of glutamine to glutamate and ammonia as part of the biosynthesis of pyridoxal 5'-phosphate. The resulting ammonia molecule is channeled to the active site of PdxS. This chain is Pyridoxal 5'-phosphate synthase subunit PdxT, found in Methanosphaerula palustris (strain ATCC BAA-1556 / DSM 19958 / E1-9c).